The sequence spans 333 residues: Glycerol-3-phosphate dehydrogenase [NAD(P)+] (333 aa).

NADPH contacts are provided by S10, W11, H31, R32, and K105. K105, G136, and S138 together coordinate sn-glycerol 3-phosphate. An NADPH-binding site is contributed by A140. Sn-glycerol 3-phosphate-binding residues include K191, D244, S254, R255, and N256. K191 acts as the Proton acceptor in catalysis. R255 serves as a coordination point for NADPH. Positions 279 and 281 each coordinate NADPH.

The protein belongs to the NAD-dependent glycerol-3-phosphate dehydrogenase family.

It is found in the cytoplasm. It carries out the reaction sn-glycerol 3-phosphate + NAD(+) = dihydroxyacetone phosphate + NADH + H(+). The catalysed reaction is sn-glycerol 3-phosphate + NADP(+) = dihydroxyacetone phosphate + NADPH + H(+). It participates in membrane lipid metabolism; glycerophospholipid metabolism. In terms of biological role, catalyzes the reduction of the glycolytic intermediate dihydroxyacetone phosphate (DHAP) to sn-glycerol 3-phosphate (G3P), the key precursor for phospholipid synthesis. The chain is Glycerol-3-phosphate dehydrogenase [NAD(P)+] from Chlorobium phaeobacteroides (strain DSM 266 / SMG 266 / 2430).